The following is a 192-amino-acid chain: Adapter protein MecA (192 aa).

It belongs to the MecA family. As to quaternary structure, homodimer.

Functionally, enables the recognition and targeting of unfolded and aggregated proteins to the ClpC protease or to other proteins involved in proteolysis. Acts negatively in the development of competence by binding ComK and recruiting it to the ClpCP protease. When overexpressed, inhibits sporulation. Also involved in Spx degradation by ClpC. The sequence is that of Adapter protein MecA from Oceanobacillus iheyensis (strain DSM 14371 / CIP 107618 / JCM 11309 / KCTC 3954 / HTE831).